The primary structure comprises 138 residues: Putative pre-16S rRNA nuclease (138 aa).

It belongs to the YqgF nuclease family.

The protein localises to the cytoplasm. In terms of biological role, could be a nuclease involved in processing of the 5'-end of pre-16S rRNA. The sequence is that of Putative pre-16S rRNA nuclease from Salmonella arizonae (strain ATCC BAA-731 / CDC346-86 / RSK2980).